Reading from the N-terminus, the 179-residue chain is ATP synthase subunit delta, chloroplastic (179 aa).

The protein belongs to the ATPase delta chain family. As to quaternary structure, F-type ATPases have 2 components, F(1) - the catalytic core - and F(0) - the membrane proton channel. F(1) has five subunits: alpha(3), beta(3), gamma(1), delta(1), epsilon(1). CF(0) has four main subunits: a(1), b(1), b'(1) and c(10-14). The alpha and beta chains form an alternating ring which encloses part of the gamma chain. F(1) is attached to F(0) by a central stalk formed by the gamma and epsilon chains, while a peripheral stalk is formed by the delta, b and b' chains.

The protein resides in the plastid. It is found in the chloroplast thylakoid membrane. Its function is as follows. F(1)F(0) ATP synthase produces ATP from ADP in the presence of a proton or sodium gradient. F-type ATPases consist of two structural domains, F(1) containing the extramembraneous catalytic core and F(0) containing the membrane proton channel, linked together by a central stalk and a peripheral stalk. During catalysis, ATP synthesis in the catalytic domain of F(1) is coupled via a rotary mechanism of the central stalk subunits to proton translocation. This protein is part of the stalk that links CF(0) to CF(1). It either transmits conformational changes from CF(0) to CF(1) or is implicated in proton conduction. In Ochrosphaera neapolitana, this protein is ATP synthase subunit delta, chloroplastic.